Consider the following 181-residue polypeptide: Oligoribonuclease (181 aa).

In terms of domain architecture, Exonuclease spans 8 to 171; the sequence is LIWVDLEMTG…EDIKESIAEM (164 aa). Tyr-129 is a catalytic residue.

It belongs to the oligoribonuclease family.

It localises to the cytoplasm. In terms of biological role, 3'-to-5' exoribonuclease specific for small oligoribonucleotides. The protein is Oligoribonuclease of Shewanella frigidimarina (strain NCIMB 400).